Here is a 122-residue protein sequence, read N- to C-terminus: Large ribosomal subunit protein uL14 (122 aa).

This sequence belongs to the universal ribosomal protein uL14 family. In terms of assembly, part of the 50S ribosomal subunit. Forms a cluster with proteins L3 and L19. In the 70S ribosome, L14 and L19 interact and together make contacts with the 16S rRNA in bridges B5 and B8.

In terms of biological role, binds to 23S rRNA. Forms part of two intersubunit bridges in the 70S ribosome. In Leptothrix cholodnii (strain ATCC 51168 / LMG 8142 / SP-6) (Leptothrix discophora (strain SP-6)), this protein is Large ribosomal subunit protein uL14.